The primary structure comprises 115 residues: Beta-2-microglobulin (115 aa).

Positions 1–18 are cleaved as a signal peptide; sequence MGLLICSLLLGLLCCSMA. The Ig-like C1-type domain maps to 23-114; it reads PKVEVYTREP…KSKDHFLMIG (92 aa).

This sequence belongs to the beta-2-microglobulin family. Heterodimer of an alpha chain and a beta chain. Beta-2-microglobulin is the beta-chain of major histocompatibility complex class I molecules.

The protein localises to the secreted. Its function is as follows. Component of the class I major histocompatibility complex (MHC). Involved in the presentation of peptide antigens to the immune system. The protein is Beta-2-microglobulin (b2m) of Paralichthys olivaceus (Bastard halibut).